The primary structure comprises 797 residues: Leucine-rich repeat-containing protein AAC1 (797 aa).

Over residues 1-12 the composition is skewed to basic and acidic residues; the sequence is MKRTSNRNEEAT. 4 disordered regions span residues 1–20, 51–103, 125–148, and 307–333; these read MKRT…SSTT, YSLF…TTTT, NLPT…TTTT, and HSTS…TITA. Residues 55 to 81 are compositionally biased toward polar residues; it reads NEPNNDNDTNSSTRPNKQQKLLKSNES. Over residues 82–103 the composition is skewed to low complexity; the sequence is TTSTTTTTTPITTTTTTTTTTT. A compositionally biased stretch (pro residues) spans 313–326; sequence SSPPPPPPPPPPQI. LRR repeat units lie at residues 376–397, 406–425, 435–456, 464–484, 492–513, 514–535, 543–564, 572–593, 601–622, and 633–653; these read KLKK…DFFS, TLET…QLLS, VLKR…YLNK, QLET…IMMK, SLKE…DFGK, SITS…KGLS, SITS…KSLS, TLKF…DHLV, SIHS…TLSQ, and PFKY…KKLI.

The sequence is that of Leucine-rich repeat-containing protein AAC1 (AAC1) from Dictyostelium discoideum (Social amoeba).